A 367-amino-acid polypeptide reads, in one-letter code: UDP-N-acetylglucosamine--N-acetylmuramyl-(pentapeptide) pyrophosphoryl-undecaprenol N-acetylglucosamine transferase (367 aa).

UDP-N-acetyl-alpha-D-glucosamine is bound by residues 15-17 (TGG), Asn-127, Arg-163, Ser-191, Ile-249, and Gln-294.

This sequence belongs to the glycosyltransferase 28 family. MurG subfamily.

Its subcellular location is the cell inner membrane. The enzyme catalyses di-trans,octa-cis-undecaprenyl diphospho-N-acetyl-alpha-D-muramoyl-L-alanyl-D-glutamyl-meso-2,6-diaminopimeloyl-D-alanyl-D-alanine + UDP-N-acetyl-alpha-D-glucosamine = di-trans,octa-cis-undecaprenyl diphospho-[N-acetyl-alpha-D-glucosaminyl-(1-&gt;4)]-N-acetyl-alpha-D-muramoyl-L-alanyl-D-glutamyl-meso-2,6-diaminopimeloyl-D-alanyl-D-alanine + UDP + H(+). It participates in cell wall biogenesis; peptidoglycan biosynthesis. Cell wall formation. Catalyzes the transfer of a GlcNAc subunit on undecaprenyl-pyrophosphoryl-MurNAc-pentapeptide (lipid intermediate I) to form undecaprenyl-pyrophosphoryl-MurNAc-(pentapeptide)GlcNAc (lipid intermediate II). This chain is UDP-N-acetylglucosamine--N-acetylmuramyl-(pentapeptide) pyrophosphoryl-undecaprenol N-acetylglucosamine transferase, found in Burkholderia pseudomallei (strain 1106a).